The sequence spans 538 residues: Putative cysteine ligase BshC (538 aa).

Positions 421 to 485 form a coiled coil; sequence VEEKFQEAKK…LERRHEVELN (65 aa).

The protein belongs to the BshC family.

In terms of biological role, involved in bacillithiol (BSH) biosynthesis. May catalyze the last step of the pathway, the addition of cysteine to glucosamine malate (GlcN-Mal) to generate BSH. The sequence is that of Putative cysteine ligase BshC from Bacillus cytotoxicus (strain DSM 22905 / CIP 110041 / 391-98 / NVH 391-98).